The sequence spans 108 residues: Insulin (108 aa).

An N-terminal signal peptide occupies residues 1–21 (MAVWIQAGALLFLLAVSSVNA). 3 disulfides stabilise this stretch: C30–C94, C42–C107, and C93–C98. The propeptide at 54–85 (DVDPPLGFLPPKSAQETEVADFAFKDHAEVIR) is c peptide.

It belongs to the insulin family. As to quaternary structure, heterodimer of a B chain and an A chain linked by two disulfide bonds.

Its subcellular location is the secreted. Its function is as follows. Insulin decreases blood glucose concentration. It increases cell permeability to monosaccharides, amino acids and fatty acids. It accelerates glycolysis, the pentose phosphate cycle, and glycogen synthesis in liver. This is Insulin (ins) from Cyprinus carpio (Common carp).